We begin with the raw amino-acid sequence, 503 residues long: Diels-Alderase cghA (503 aa).

The protein belongs to the Diels-Alderase family.

It carries out the reaction (2S)-3-[(2S)-3,5-dioxo-4-[(2E,4R,6R,8E,10E,12E)-4,6,12-trimethyltetradeca-2,8,10,12-tetraenoyl]pyrrolidin-2-yl]-2-hydroxy-2-methylpropanoate = sch 210972. It participates in secondary metabolite biosynthesis. Diels-Alderase; part of the gene cluster that mediates the biosynthesis of the tetramic acid Sch210972, a potential anti-HIV fungal natural product that contains a decalin core. The PKS module of cghG together with the enoylreductase cghC catalyze the formation of the polyketide unit which is then conjugated to 4-hydroxyl-4-methyl glutamate (HMG) by the condensation domain of the cghG NRPS module. One unique structural feature of Sch210972 is the tetramic acid motif proposed to be derived from the non-proteinogenic amino acid HMG, by a Dieckmann-type condensation catalyzed by the reductase domain of cghG. The aldolase cghB catalyzes the aldol condensation of 2 molecules of pyruvic acid to yield the intermediate 4-hydroxyl-4-methyl-2-oxoglutarate (HMOG), which can then be stereoselectively transaminated by an unidentified enzyme to form HMG. The Diels-Alderase cghA then uses the Dieckmann product released by cghG as substrate and catalyzes the Diels-Alder cycloaddition to form the decalin ring of Sch210972. CghA also suppresses the nonenzymatic formation of the alternative stereoisomer. This Chaetomium globosum (strain ATCC 6205 / CBS 148.51 / DSM 1962 / NBRC 6347 / NRRL 1970) (Soil fungus) protein is Diels-Alderase cghA.